A 356-amino-acid polypeptide reads, in one-letter code: MSETPLIDAMLAEHAELEKQLADPALHADAAAARKAGRRFAMLSPIVATHRKLATARDDLATARELSADDPSFADEVTELESSIAELETQLSDMLAPRDPHDGDDILLEVKSGEGGEESALFAADLARMYIRYAERHGWKVTVLDETESDLGGYKDATLAIASKGDSADGVWSRLKFEGGVHRVQRVPVTESQGRVHTSAAGVLVYPEPEEVEEIQIDESDLRIDVYRSSGKGGQGVNTTDSAVRITHLPTGIVVTCQNERSQLQNKARAMQVLAARLQALAEEQAQADASAGRASQIRTVDRSERIRTYNFPENRITDHRVGFKAHNLDQVLDGDLDALFDALAAADRKARLQEA.

An N5-methylglutamine modification is found at glutamine 235.

The protein belongs to the prokaryotic/mitochondrial release factor family. In terms of processing, methylated by PrmC. Methylation increases the termination efficiency of RF1.

The protein resides in the cytoplasm. Peptide chain release factor 1 directs the termination of translation in response to the peptide chain termination codons UAG and UAA. The protein is Peptide chain release factor 1 of Mycobacteroides abscessus (strain ATCC 19977 / DSM 44196 / CCUG 20993 / CIP 104536 / JCM 13569 / NCTC 13031 / TMC 1543 / L948) (Mycobacterium abscessus).